We begin with the raw amino-acid sequence, 326 residues long: Cobalamin biosynthesis protein CobD (326 aa).

A run of 4 helical transmembrane segments spans residues M58 to L78, L81 to L101, F157 to L177, and V304 to L324.

It belongs to the CobD/CbiB family.

The protein localises to the cell membrane. The protein operates within cofactor biosynthesis; adenosylcobalamin biosynthesis. Converts cobyric acid to cobinamide by the addition of aminopropanol on the F carboxylic group. In Sinorhizobium fredii (strain NBRC 101917 / NGR234), this protein is Cobalamin biosynthesis protein CobD.